A 946-amino-acid polypeptide reads, in one-letter code: Protein RRC1 (946 aa).

Disordered stretches follow at residues 1–29 and 41–183; these read MSSF…KAED and SFQG…NLYV. 3 stretches are compositionally biased toward basic and acidic residues: residues 15–29, 62–75, and 98–147; these read KHRE…KAED, DKPK…KSKD, and KGKE…DRQG. The RRM domain maps to 179-260; it reads TNLYVGNLSP…YELKIGWGKA (82 aa). An SURP motif repeat occupies 329-372; it reads VIDTLALYVLDGECAFEQAIMERGRGNPLFKFMFELGSKEHTYY. One can recognise a CID domain in the interval 437-582; that stretch reads LTDPQRDEFE…GLRSTFLRSG (146 aa). The 35-residue stretch at 631–665 folds into the SAP domain; the sequence is LMNLPIAELERRCRHNGLSLVGGRVMMVTRLLSLE. Disordered regions lie at residues 740 to 797 and 836 to 946; these read ASKW…EQRQ and EVDY…RGTR. A compositionally biased stretch (polar residues) spans 757–767; the sequence is SSSSGSDNTGG. 3 stretches are compositionally biased toward basic and acidic residues: residues 772-781, 854-868, and 886-946; these read ADGEDLKGND, IIER…QESS, and STRE…RGTR.

As to quaternary structure, component of the SWAP1-SFPS-RRC1 splicing factor complex which modulates pre-mRNA splicing to promote photomorphogenesis. Interacts with SWAP1 in a light-independent manner. As to expression, expressed in leaves, inflorescence stems, roots, flower buds, open flowers and siliques.

The protein localises to the nucleus speckle. In terms of biological role, as a member of the SWAP1-SFPS-RRC1 splicing factor complex, modulates photomorphogenesis by regulating the gene expression and pre-messenger RNA (mRNA) alternative splicing of a large number of genes, including those involved in plant responses to light signaling. SR-like splicing factor required for phytochrome B (phyB) signal transduction and involved in phyB-dependent alternative splicing. The chain is Protein RRC1 from Arabidopsis thaliana (Mouse-ear cress).